A 140-amino-acid polypeptide reads, in one-letter code: GTP-dependent dephospho-CoA kinase (140 aa).

GTP is bound by residues Asp-21, Val-22, Val-23, Asp-40, Lys-42, and Glu-92.

It belongs to the GTP-dependent DPCK family.

The catalysed reaction is 3'-dephospho-CoA + GTP = GDP + CoA + H(+). The protein operates within cofactor biosynthesis; coenzyme A biosynthesis. Its function is as follows. Catalyzes the GTP-dependent phosphorylation of the 3'-hydroxyl group of dephosphocoenzyme A to form coenzyme A (CoA). In Pyrobaculum aerophilum (strain ATCC 51768 / DSM 7523 / JCM 9630 / CIP 104966 / NBRC 100827 / IM2), this protein is GTP-dependent dephospho-CoA kinase.